The primary structure comprises 145 residues: Major pollen allergen Lig v 1 (145 aa).

Disulfide bonds link Cys-19-Cys-90, Cys-22-Cys-131, and Cys-43-Cys-78. Residue Asn-111 is glycosylated (N-linked (GlcNAc...) asparagine).

The protein belongs to the Ole e I family.

The protein localises to the secreted. This chain is Major pollen allergen Lig v 1, found in Ligustrum vulgare (Common privet).